The chain runs to 118 residues: MICOS complex subunit MIC13 (118 aa).

At 1–7 (MVARVWS) the chain is on the mitochondrial matrix side. A helical transmembrane segment spans residues 8–26 (LMRFLIKGSVAGGAVYLVY). Residues 27-118 (DQELLGPSDK…GWEYVKARTK (92 aa)) lie on the Mitochondrial intermembrane side of the membrane.

This sequence belongs to the MICOS complex subunit Mic13 family. In terms of assembly, component of the mitochondrial contact site and cristae organizing system (MICOS) complex, composed of at least MICOS10/MIC10, CHCHD3/MIC19, CHCHD6/MIC25, APOO/MIC26, MICOS13/MIC13, APOOL/MIC27 and IMMT/MIC60. The MICOS complex associates with mitochondrial outer membrane proteins SAMM50, MTX1 and MTX2 (together described as components of the mitochondrial outer membrane sorting assembly machinery (SAM) complex) and DNAJC11, mitochondrial inner membrane protein TMEM11 and with HSPA9. The MICOS and SAM complexes together with DNAJC11 are part of a large protein complex spanning both membranes termed the mitochondrial intermembrane space bridging (MIB) complex.

The protein localises to the mitochondrion inner membrane. Component of the MICOS complex, a large protein complex of the mitochondrial inner membrane that plays crucial roles in the maintenance of crista junctions, inner membrane architecture, and formation of contact sites to the outer membrane. Constituent of mature MICOS complex, it is required for the formation of cristae junction (CJ) and maintenance of cristae morphology. Required for the incorporation of MICOS10/MIC10 into the MICOS complex. The sequence is that of MICOS complex subunit MIC13 from Homo sapiens (Human).